Consider the following 129-residue polypeptide: 8-oxo-dGTP diphosphatase (129 aa).

The Nudix hydrolase domain maps to 1–129 (MKKLQIAVGI…EPVIAKLKRL (129 aa)). 8-oxo-dGTP is bound by residues R23, H28, and 34–37 (EFPG). Residues G37 and E57 each contribute to the Mg(2+) site. The Nudix box motif lies at 38 to 59 (GKIEMGETPEQAVVRELQEEVG). An 8-oxo-dGTP-binding site is contributed by N119.

The protein belongs to the Nudix hydrolase family. Monomer. The cofactor is Mg(2+).

It carries out the reaction 8-oxo-dGTP + H2O = 8-oxo-dGMP + diphosphate + H(+). It catalyses the reaction 8-oxo-GTP + H2O = 8-oxo-GMP + diphosphate + H(+). The catalysed reaction is 8-oxo-dGDP + H2O = 8-oxo-dGMP + phosphate + H(+). The enzyme catalyses 8-oxo-GDP + H2O = 8-oxo-GMP + phosphate + H(+). Specifically hydrolyzes both 8-oxo-deoxyguanosine triphosphate (8-oxo-dGTP) and 8-oxo-guanosine triphosphate (8-oxo-GTP) to the related monophosphates, thereby cleaning up the nucleotide pools and preventing misincorporation of 8-oxoGua into DNA and RNA. It prevents replicational errors by removing an oxidatively damaged form of guanine (8-oxo-dGTP) from DNA and the nucleotide pool. 8-oxo-dGTP can be inserted opposite dA and dC residues of template DNA with almost equal efficiency thus leading to A.T to G.C transversions. MutT may also ensure transcriptional fidelity, removing 8-oxo-GTP from the ribonucleotide triphosphate pool. However, due to the lower efficiency of RNA polymerase 8-oxo-GTP incorporation, MutT is probably not a major contributor to transcriptional fidelity. It also hydrolyzes 8-oxo-dGDP and 8-oxo-GDP to their monophosphate form. In vitro, can also use dGTP, dGDP and other various nucleoside di- and triphosphates, with much lower efficiency. Works cooperatively with MutM and MutY to prevent accumulation in the DNA of oxidized guanine residues. The chain is 8-oxo-dGTP diphosphatase from Escherichia coli (strain K12).